The chain runs to 692 residues: Methionine--tRNA ligase (692 aa).

The 'HIGH' region signature appears at 12-22; the sequence is PYANGSFHIGH. Cys-143, Cys-146, Cys-156, and Cys-159 together coordinate Zn(2+). The 'KMSKS' region signature appears at 341–345; it reads KMSKS. Lys-344 contacts ATP. A tRNA-binding domain is found at 586 to 692; that stretch reads DFAKIDLRIA…PGAQPGMRVR (107 aa).

This sequence belongs to the class-I aminoacyl-tRNA synthetase family. MetG type 1 subfamily. In terms of assembly, homodimer. It depends on Zn(2+) as a cofactor.

The protein resides in the cytoplasm. The enzyme catalyses tRNA(Met) + L-methionine + ATP = L-methionyl-tRNA(Met) + AMP + diphosphate. In terms of biological role, is required not only for elongation of protein synthesis but also for the initiation of all mRNA translation through initiator tRNA(fMet) aminoacylation. The sequence is that of Methionine--tRNA ligase from Bordetella bronchiseptica (strain ATCC BAA-588 / NCTC 13252 / RB50) (Alcaligenes bronchisepticus).